Reading from the N-terminus, the 385-residue chain is Flap endonuclease 1 (385 aa).

Positions 1–105 (MGIKGLNAII…HELSKRSARR (105 aa)) are N-domain. D34 is a binding site for Mg(2+). R47 and R71 together coordinate DNA. Residues D87, E156, E158, D177, and D179 each coordinate Mg(2+). The I-domain stretch occupies residues 120 to 251 (EKLKHERRLV…VTALKLIKEH (132 aa)). E156 contacts DNA. 2 residues coordinate DNA: G229 and D231. D231 serves as a coordination point for Mg(2+). The interval 338 to 346 (VQGRLDGFF) is interaction with PCNA. Positions 356–370 (LAAANAKAKSTKAGK) are enriched in low complexity. The tract at residues 356–385 (LAAANAKAKSTKAGKQATKGKVGKPGRPRK) is disordered. Basic residues predominate over residues 376 to 385 (KVGKPGRPRK).

Belongs to the XPG/RAD2 endonuclease family. FEN1 subfamily. In terms of assembly, interacts with PCNA. Three molecules of FEN1 bind to one PCNA trimer with each molecule binding to one PCNA monomer. PCNA stimulates the nuclease activity without altering cleavage specificity. Mg(2+) is required as a cofactor. Phosphorylated. Phosphorylation upon DNA damage induces relocalization to the nuclear plasma.

It is found in the nucleus. The protein resides in the nucleolus. It localises to the nucleoplasm. The protein localises to the mitochondrion. Its function is as follows. Structure-specific nuclease with 5'-flap endonuclease and 5'-3' exonuclease activities involved in DNA replication and repair. During DNA replication, cleaves the 5'-overhanging flap structure that is generated by displacement synthesis when DNA polymerase encounters the 5'-end of a downstream Okazaki fragment. It enters the flap from the 5'-end and then tracks to cleave the flap base, leaving a nick for ligation. Also involved in the long patch base excision repair (LP-BER) pathway, by cleaving within the apurinic/apyrimidinic (AP) site-terminated flap. Acts as a genome stabilization factor that prevents flaps from equilibrating into structures that lead to duplications and deletions. Also possesses 5'-3' exonuclease activity on nicked or gapped double-stranded DNA, and exhibits RNase H activity. Also involved in replication and repair of rDNA and in repairing mitochondrial DNA. This chain is Flap endonuclease 1, found in Lachancea thermotolerans (strain ATCC 56472 / CBS 6340 / NRRL Y-8284) (Yeast).